The primary structure comprises 124 residues: uncharacterized protein (124 aa).

It belongs to the YciI family.

This is an uncharacterized protein from Rhizobium meliloti (strain 1021) (Ensifer meliloti).